The sequence spans 415 residues: Alpha-N-acetylgalactosaminidase (415 aa).

The first 17 residues, 1–17, serve as a signal peptide directing secretion; the sequence is MLQKTVLLLALVAQVLM. 3 cysteine pairs are disulfide-bonded: cysteine 38-cysteine 80, cysteine 42-cysteine 49, and cysteine 127-cysteine 158. Substrate contacts are provided by residues 78-79 and lysine 154; that span reads DD. The active-site Nucleophile is aspartate 156. Asparagine 177 is a glycosylation site (N-linked (GlcNAc...) asparagine). A disulfide bridge links cysteine 187 with cysteine 209. Serine 188 lines the substrate pocket. The N-linked (GlcNAc...) asparagine glycan is linked to asparagine 201. Substrate is bound by residues arginine 213 and aspartate 217. Residue aspartate 217 is the Proton donor of the active site. Serine 322 carries the phosphoserine modification. The N-linked (GlcNAc...) asparagine glycan is linked to asparagine 330. Phosphoserine is present on serine 332. An N-linked (GlcNAc...) asparagine glycan is attached at asparagine 385.

This sequence belongs to the glycosyl hydrolase 27 family. In terms of assembly, homodimer.

It is found in the lysosome. The catalysed reaction is Cleavage of non-reducing alpha-(1-&gt;3)-N-acetylgalactosamine residues from human blood group A and AB mucin glycoproteins, Forssman hapten and blood group A lacto series glycolipids.. It catalyses the reaction a neolactoside IV(3)-alpha-GalNAc,IV(2)-alpha-Fuc-nLc4Cer(d18:1(4E)) + H2O = a neolactoside IV(2)-alpha-Fuc-nLc4Cer(d18:1(4E)) + N-acetyl-alpha-D-galactosamine. It carries out the reaction a neolactoside IV(3)-alpha-GalNAc,IV(2)-alpha-Fuc-nLc4Cer(d18:0) + H2O = a neolactoside IV(2)-alpha-Fuc-nLc4Cer(d18:0) + N-acetyl-alpha-D-galactosamine. The enzyme catalyses a globoside IV3GalNAc-Gb4Cer + H2O = N-acetyl-alpha-D-galactosamine + a globoside Gb4Cer. In terms of biological role, removes terminal alpha-N-acetylgalactosamine residues from glycolipids and glycopeptides. Required for the breakdown of glycolipids. This is Alpha-N-acetylgalactosaminidase (Naga) from Rattus norvegicus (Rat).